The chain runs to 86 residues: Probable acyl carrier protein CCNA_01221 (86 aa).

The region spanning 6–83 (TVTDLSLREI…DLSKLINDLR (78 aa)) is the Carrier domain. S43 is subject to O-(pantetheine 4'-phosphoryl)serine.

This sequence belongs to the acyl carrier protein (ACP) family.

The protein operates within lipid metabolism; sphingolipid metabolism. Functionally, involved in de novo bacterial ceramide synthesis. This is Probable acyl carrier protein CCNA_01221 from Caulobacter vibrioides (strain NA1000 / CB15N) (Caulobacter crescentus).